Here is a 437-residue protein sequence, read N- to C-terminus: Protein translocase subunit SecY (437 aa).

The next 10 membrane-spanning stretches (helical) occupy residues 19-39 (LFTL…IPGV), 69-89 (LLQI…SIIL), 122-142 (VALA…GALF), 157-177 (IFTT…VMWL), 189-209 (GMSI…LWAI), 219-239 (WIEF…VVFV), 275-295 (GVIP…IVQF), 318-338 (HIIL…AISF), 378-398 (GSLY…GFGA), and 400-420 (QNFP…LETV).

The protein belongs to the SecY/SEC61-alpha family. In terms of assembly, component of the Sec protein translocase complex. Heterotrimer consisting of SecY, SecE and SecG subunits. The heterotrimers can form oligomers, although 1 heterotrimer is thought to be able to translocate proteins. Interacts with the ribosome. Interacts with SecDF, and other proteins may be involved. Interacts with SecA.

Its subcellular location is the cell membrane. In terms of biological role, the central subunit of the protein translocation channel SecYEG. Consists of two halves formed by TMs 1-5 and 6-10. These two domains form a lateral gate at the front which open onto the bilayer between TMs 2 and 7, and are clamped together by SecE at the back. The channel is closed by both a pore ring composed of hydrophobic SecY resides and a short helix (helix 2A) on the extracellular side of the membrane which forms a plug. The plug probably moves laterally to allow the channel to open. The ring and the pore may move independently. In Streptomyces coelicolor (strain ATCC BAA-471 / A3(2) / M145), this protein is Protein translocase subunit SecY.